Here is a 489-residue protein sequence, read N- to C-terminus: L-asparagine permease (489 aa).

12 consecutive transmembrane segments (helical) span residues 38 to 58, 62 to 82, 113 to 133, 150 to 170, 175 to 195, 223 to 243, 268 to 288, 302 to 322, 357 to 377, 382 to 402, 426 to 446, and 452 to 472; these read HVNM…GAGG, DAGP…FFVV, VAGW…ITAI, VLAL…VKIF, FWFA…GIFL, VMPV…LELV, VALF…SSLY, IGVP…AMSS, YGGI…NYLV, FEIV…IIMI, SPVT…LMWN, and RKTV…WFGV.

This sequence belongs to the amino acid-polyamine-organocation (APC) superfamily. Amino acid transporter (AAT) (TC 2.A.3.1) family.

It is found in the cell membrane. The chain is L-asparagine permease (ansP) from Streptomyces coelicolor (strain ATCC BAA-471 / A3(2) / M145).